A 547-amino-acid polypeptide reads, in one-letter code: Chaperonin GroEL 1 (547 aa).

Residues 29–32 (TLGP), 86–90 (DGTTT), Gly418, 482–484 (NAA), and Asp498 each bind ATP.

It belongs to the chaperonin (HSP60) family. As to quaternary structure, forms a cylinder of 14 subunits composed of two heptameric rings stacked back-to-back. Interacts with the co-chaperonin GroES.

It is found in the cytoplasm. It catalyses the reaction ATP + H2O + a folded polypeptide = ADP + phosphate + an unfolded polypeptide.. Together with its co-chaperonin GroES, plays an essential role in assisting protein folding. The GroEL-GroES system forms a nano-cage that allows encapsulation of the non-native substrate proteins and provides a physical environment optimized to promote and accelerate protein folding. This is Chaperonin GroEL 1 from Corynebacterium jeikeium (strain K411).